The chain runs to 707 residues: Zinc finger protein 60 (707 aa).

A KRAB domain is found at 14–86; the sequence is VTFRDVAVDF…VKKETGRPSQ (73 aa). 19 C2H2-type zinc fingers span residues 173–195, 201–223, 229–251, 257–282, 288–310, 316–338, 344–366, 372–394, 400–422, 428–450, 456–478, 484–506, 512–534, 540–562, 568–590, 596–618, 624–646, 652–674, and 680–702; these read YKCK…ESIH, YECK…QKSH, FECN…KNIH, FECE…RTIH, YKCN…QKIH, FHCK…ENIH, FECK…YDTH, FECN…QKTH, FKCK…QRIH, YQCK…QSIH, FECK…QRFH, FECK…KTSH, FECK…RIIH, YKCN…EKIH, FECK…QTIH, YECE…QRIH, FQCK…ERIH, FQCK…FRIH, and YECS…QSIH.

The protein belongs to the krueppel C2H2-type zinc-finger protein family. In terms of tissue distribution, expressed widely and evenly in most adult mouse tissues.

The protein localises to the nucleus. May have a role during differentiation processes. The sequence is that of Zinc finger protein 60 (Zfp60) from Mus musculus (Mouse).